The following is a 157-amino-acid chain: Phosphopantetheine adenylyltransferase (157 aa).

Substrate is bound at residue Ser-8. Residues 8–9 (SF) and His-16 each bind ATP. The substrate site is built by Lys-40, Thr-72, and Arg-86. Residues 87–89 (GLR), Glu-97, and 122–128 (YSFLSSS) contribute to the ATP site.

Belongs to the bacterial CoaD family. Homohexamer. Requires Mg(2+) as cofactor.

It localises to the cytoplasm. The enzyme catalyses (R)-4'-phosphopantetheine + ATP + H(+) = 3'-dephospho-CoA + diphosphate. The protein operates within cofactor biosynthesis; coenzyme A biosynthesis; CoA from (R)-pantothenate: step 4/5. Its function is as follows. Reversibly transfers an adenylyl group from ATP to 4'-phosphopantetheine, yielding dephospho-CoA (dPCoA) and pyrophosphate. This is Phosphopantetheine adenylyltransferase from Crocosphaera subtropica (strain ATCC 51142 / BH68) (Cyanothece sp. (strain ATCC 51142)).